We begin with the raw amino-acid sequence, 101 residues long: Large ribosomal subunit protein uL24 (101 aa).

It belongs to the universal ribosomal protein uL24 family. In terms of assembly, part of the 50S ribosomal subunit.

One of two assembly initiator proteins, it binds directly to the 5'-end of the 23S rRNA, where it nucleates assembly of the 50S subunit. In terms of biological role, one of the proteins that surrounds the polypeptide exit tunnel on the outside of the subunit. This is Large ribosomal subunit protein uL24 from Borreliella burgdorferi (strain ATCC 35210 / DSM 4680 / CIP 102532 / B31) (Borrelia burgdorferi).